A 70-amino-acid polypeptide reads, in one-letter code: Melittin (70 aa).

The signal sequence occupies residues 1–21 (MKFLVNVALVFMVVYISYIYA). Positions 22 to 43 (APEPEPAPEPEAEADAEADPEA) are cleaved as a propeptide — removed by a dipeptidylpeptidase. Gly44 is modified (N-formylglycine; partial). Gln69 carries the glutamine amide modification.

This sequence belongs to the melittin family. As to quaternary structure, monomer (in solution and for integration into membranes), homotetramer (in solution and potentially as a toroidal pore in membranes), and potenially homomultimer (as a toroidal pore in membranes). Expressed by the venom gland.

It is found in the secreted. It localises to the target cell membrane. In terms of biological role, melittin: Main toxin of bee venom with strong antimicrobial activity and hemolytic activity. It has enhancing effects on bee venom phospholipase A2 activity. This amphipathic toxin binds to negatively charged membrane surface and forms pore by inserting into lipid bilayers inducing the leakage of ions and molecules and the enhancement of permeability that ultimately leads to cell lysis. It acts as a voltage-gated pore with higher selectivity for anions over cations. The ion conductance has been shown to be voltage-dependent. Self-association of melittin in membranes is promoted by high ionic strength, but not by the presence of negatively charged lipids. In vivo, intradermal injection into healthy human volunteers produce sharp pain sensation and an inflammatory response. It produces pain by activating primary nociceptor cells directly and indirectly due to its ability to activate plasma membrane phospholipase A2 and its pore-forming activity. In the context of inflammation and cancer tests, is highly cytotoxic to normal cells, highly induces calcium signaling and almost completely prevents cAMP production. In addition, prevents LPS-induced nitric oxid (NO) synthesis but does not affect the IP3 signaling and pro-inflammatory activation of endothelial cells. Also shows significant antiproliferative activity on the breast cancer cell line MDA-MB-231. Melittin-S: 1.4-fold less hemolytic and adopts a less organized secondary structure than melittin. Its function is as follows. Melittin-2: Has strong hemolytic activity. The protein is Melittin (MELT) of Apis mellifera (Honeybee).